Reading from the N-terminus, the 244-residue chain is MPALLKRLLFQVGPHPNERTFTLSSVSTDGHYISLRPFVKPSGDELSFPFEWAFAGTNETVKANDQGNGVVTQDFNFWLDTNVYLNVPNTHRGEVNTTWKNWDSGCVEETGAVYPFGADKESVSFRELWQPVDPSREDLVIVSPNNEKFSSNARSIVLKVTDEAYDGLVIVIGRWIQGFLSQKNNNTIEGLNFIRLLEKDSGKSEFLLSYGKEVNKIPQSYENLKKGSTVTSNGLNWEVIEYHA.

Serine 143 carries the post-translational modification Phosphoserine.

It belongs to the HRI1 family. Interacts with HRR25. May interact with SEC72.

Its subcellular location is the cytoplasm. It is found in the nucleus. In terms of biological role, unknown. Non essential. This chain is Protein HRI1 (HRI1), found in Saccharomyces cerevisiae (strain ATCC 204508 / S288c) (Baker's yeast).